The following is a 302-amino-acid chain: MDQQRLTHLKQLEAESIHIIREVAAEFDNPVMMYSIGKDSSVMLHLTRKAFYPGKIPFPLLHVDTDWKFRDMITFRDATAKKYGFDLIVHKNPEGLAAGINPFDHGSSKHTDIMKTQGLKQALNKYGFDAAFGGARRDEEKSRAKERVYSFRDKNHTWDPKNQRPELWRTYNGQINKGESIRVFPLSNWTELDIWQYIYLENIEIVPLYLADVRPVVQRDGMLIMVDDDRMKLREGEQIEHKSVRFRTLGCYPLTGAIESQANTLTEIIEEMLVATSSERQGRAIDHDQSGSMELKKRQGYF.

A disordered region spans residues 280-302 (RQGRAIDHDQSGSMELKKRQGYF).

The protein belongs to the PAPS reductase family. CysD subfamily. In terms of assembly, heterodimer composed of CysD, the smaller subunit, and CysN.

It catalyses the reaction sulfate + ATP + H(+) = adenosine 5'-phosphosulfate + diphosphate. The protein operates within sulfur metabolism; hydrogen sulfide biosynthesis; sulfite from sulfate: step 1/3. Functionally, with CysN forms the ATP sulfurylase (ATPS) that catalyzes the adenylation of sulfate producing adenosine 5'-phosphosulfate (APS) and diphosphate, the first enzymatic step in sulfur assimilation pathway. APS synthesis involves the formation of a high-energy phosphoric-sulfuric acid anhydride bond driven by GTP hydrolysis by CysN coupled to ATP hydrolysis by CysD. The chain is Sulfate adenylyltransferase subunit 2 from Vibrio cholerae serotype O1 (strain ATCC 39541 / Classical Ogawa 395 / O395).